Reading from the N-terminus, the 256-residue chain is Floral homeotic protein APETALA 1 (256 aa).

In terms of domain architecture, MADS-box spans 1-61 (MGRGRVQLKR…GKLFEYSTDS (61 aa)). The K-box domain occupies 88 to 178 (NTNWSMEYNR…SKQIKEREKV (91 aa)). Residues 180 to 206 (RAQQEQWDQQNHGQNMPPPPPPQEHQI) form a disordered region.

As to quaternary structure, homodimer capable of binding to CArG-box sequences.

It is found in the nucleus. Its function is as follows. Transcription factor that promotes early floral meristem identity in synergy with LEAFY. Displays a redundant function with CAULIFLOWER in the up-regulation of LEAFY. Required subsequently for the transition of an inflorescence meristem into a floral meristem, and for the normal development of sepals and petals in flowers. Regulates positively B class homeotic proteins. This chain is Floral homeotic protein APETALA 1 (AP1), found in Brassica rapa subsp. pekinensis (Chinese cabbage).